Consider the following 432-residue polypeptide: Adenylosuccinate synthetase (432 aa).

Residues 11–17 (GDEGKGK) and 39–41 (GHT) contribute to the GTP site. Catalysis depends on Asp12, which acts as the Proton acceptor. Mg(2+) contacts are provided by Asp12 and Gly39. IMP is bound by residues 12 to 15 (DEGK), 37 to 40 (NAGH), Thr134, Arg148, Asn230, Thr245, and Arg309. His40 (proton donor) is an active-site residue. Residue 305-311 (VTTGRKR) participates in substrate binding. Residues Arg311, 337 to 339 (KLD), and 419 to 421 (GTG) each bind GTP.

This sequence belongs to the adenylosuccinate synthetase family. As to quaternary structure, homodimer. Mg(2+) serves as cofactor.

Its subcellular location is the cytoplasm. The enzyme catalyses IMP + L-aspartate + GTP = N(6)-(1,2-dicarboxyethyl)-AMP + GDP + phosphate + 2 H(+). It functions in the pathway purine metabolism; AMP biosynthesis via de novo pathway; AMP from IMP: step 1/2. Its function is as follows. Plays an important role in the de novo pathway and in the salvage pathway of purine nucleotide biosynthesis. Catalyzes the first committed step in the biosynthesis of AMP from IMP. This Kluyveromyces lactis (strain ATCC 8585 / CBS 2359 / DSM 70799 / NBRC 1267 / NRRL Y-1140 / WM37) (Yeast) protein is Adenylosuccinate synthetase.